The sequence spans 95 residues: Scytovirin (95 aa).

An SD1 region spans residues 3-41 (GPTYCWNEANNPGGPNRCSNNKQCDGARTCSSSGFCQGT). Cystine bridges form between cysteine 7/cysteine 55, cysteine 20/cysteine 32, cysteine 26/cysteine 38, cysteine 68/cysteine 80, and cysteine 74/cysteine 86. Residues 51-89 (GPTYCWDEAKNPGGPNRCSNSKQCDGARTCSSSGFCQGT) are SD2.

In terms of biological role, has strong anti-HIV activity against T-tropic strains of HIV-1 and weaker activity against M-tropic strains of HIV-1. Inhibits HIV-1 fusion and infection of CD4 LTR beta-gal cells in vitro. Inhibits fusion of HIV infected CEM-SS cells with uninfected CEM-SS cells, and fusion of HIV-1 Env expressing HL2/3 cells with CD4 LTR beta-gal cells. Binds to HIV gp120, HIV gp160 and to a lesser extent HIV gp41. Binding to HIV gp120 is glycosylation dependent. Binds with high specificity to the tetrasaccharide Man-alpha-1,2-Man-alpha-1,6-Man-alpha-1,6-Man and also binds the higher-order oligosaccharides oligomannose 8 and oligomannose 9. Does not bind to monosaccharides, complex or hybrid N-linked oligosaccharides or chitin. The protein is Scytovirin of Scytonema varium.